Here is a 286-residue protein sequence, read N- to C-terminus: 4-hydroxybenzoate octaprenyltransferase (286 aa).

The next 9 helical transmembrane spans lie at 22-42 (IGTL…SAGV), 45-65 (FSLL…GCVI), 90-110 (LTAV…FVLV), 113-133 (LNQF…IYPF), 142-162 (QVVL…AVVG), 169-189 (WLLF…YAMV), 212-232 (LYIA…GWLE), 236-256 (VSYY…QWLI), and 265-285 (FRAF…IMLA).

Belongs to the UbiA prenyltransferase family. The cofactor is Mg(2+).

Its subcellular location is the cell inner membrane. It catalyses the reaction all-trans-octaprenyl diphosphate + 4-hydroxybenzoate = 4-hydroxy-3-(all-trans-octaprenyl)benzoate + diphosphate. It functions in the pathway cofactor biosynthesis; ubiquinone biosynthesis. Its function is as follows. Catalyzes the prenylation of para-hydroxybenzoate (PHB) with an all-trans polyprenyl group. Mediates the second step in the final reaction sequence of ubiquinone-8 (UQ-8) biosynthesis, which is the condensation of the polyisoprenoid side chain with PHB, generating the first membrane-bound Q intermediate 3-octaprenyl-4-hydroxybenzoate. The chain is 4-hydroxybenzoate octaprenyltransferase from Tolumonas auensis (strain DSM 9187 / NBRC 110442 / TA 4).